A 1037-amino-acid chain; its full sequence is Multidrug resistance protein MdtF (1037 aa).

Residues 1-9 (MANYFIDRP) lie on the Cytoplasmic side of the membrane. Residues 10–30 (VFAWVLAIIMMLAGGLAIMNL) traverse the membrane as a helical segment. Over 31–338 (PVAQYPQIAP…TTPFIEISIQ (308 aa)) the chain is Periplasmic. Residues 339–359 (EVFKTLVEAIILVFLVMYLFL) form a helical membrane-spanning segment. Topologically, residues 360 to 369 (QNFRATIIPT) are cytoplasmic. The helical transmembrane segment at 370-390 (IAVPVVILGTFAILSAVGFTI) threads the bilayer. Residues 391–392 (NT) are Periplasmic-facing. Residues 393 to 413 (LTMFGMVLAIGLLVDDAIVVV) form a helical membrane-spanning segment. At 414-441 (ENVERVIAEDKLPPKEATHKSMGQIQRA) the chain is on the cytoplasmic side. A helical transmembrane segment spans residues 442-462 (LVGIAVVLSAVFMPMAFMSGA). Topologically, residues 463 to 471 (TGEIYRQFS) are periplasmic. The chain crosses the membrane as a helical span at residues 472-492 (ITLISSMLLSVFVAMSLTPAL). Over 493–534 (CATILKAAPEGGHKPNALFARFNTLFEKSTQHYTDSTRSLLR) the chain is Cytoplasmic. The helical transmembrane segment at 535–555 (CTGRYMVIYLLICAGMAVLFL) threads the bilayer. The Periplasmic segment spans residues 556-870 (RTPTSFLPEE…SYQEALSSNQ (315 aa)). A helical membrane pass occupies residues 871–891 (APALYAISLVVVFLALAALYE). A topological domain (cytoplasmic) is located at residue Ser-892. The helical transmembrane segment at 893–913 (WSIPFSVMLVVPLGVVGALLA) threads the bilayer. The Periplasmic segment spans residues 914–927 (TDLRGLSNDVYFQV). Residues 928-948 (GLLTTIGLSAKNAILIVEFAV) form a helical membrane-spanning segment. Residues 949-972 (EMMQKEGKTPIEAIIEAARMRLRP) lie on the Cytoplasmic side of the membrane. A helical membrane pass occupies residues 973 to 993 (ILMTSLAFILGVLPLVISHGA). At 994–1006 (GSGAQNAVGTGVM) the chain is on the periplasmic side. A helical membrane pass occupies residues 1007–1027 (GGMFAATVLAIYFVPVFFVVV). Topologically, residues 1028–1037 (EHLFARFKKA) are cytoplasmic.

Belongs to the resistance-nodulation-cell division (RND) (TC 2.A.6) family. In terms of assembly, homotrimer. Part of the tripartite efflux system MdtEF-TolC, which is composed of an inner membrane transporter, MdtF, a membrane fusion protein, MdtE, and an outer membrane component, TolC. The complex forms a large protein conduit and can translocate molecules across both the inner and outer membranes.

It localises to the cell inner membrane. Its function is as follows. Part of the tripartite efflux system MdtEF-TolC, which confers resistance to various compounds. This chain is Multidrug resistance protein MdtF (mdtF), found in Escherichia coli O157:H7.